We begin with the raw amino-acid sequence, 245 residues long: Small ribosomal subunit protein uS2 (245 aa).

It belongs to the universal ribosomal protein uS2 family.

The sequence is that of Small ribosomal subunit protein uS2 from Pseudomonas putida (strain GB-1).